We begin with the raw amino-acid sequence, 482 residues long: UDP-N-acetylmuramate--L-alanine ligase (482 aa).

Gly129 to Thr135 is a binding site for ATP.

The protein belongs to the MurCDEF family.

Its subcellular location is the cytoplasm. The catalysed reaction is UDP-N-acetyl-alpha-D-muramate + L-alanine + ATP = UDP-N-acetyl-alpha-D-muramoyl-L-alanine + ADP + phosphate + H(+). The protein operates within cell wall biogenesis; peptidoglycan biosynthesis. Cell wall formation. The polypeptide is UDP-N-acetylmuramate--L-alanine ligase (Acinetobacter baylyi (strain ATCC 33305 / BD413 / ADP1)).